Here is a 386-residue protein sequence, read N- to C-terminus: N-acetylneuraminate epimerase (386 aa).

The N-terminal stretch at 1–29 (MGMQMKNFKKMMTLMALCFSVAITTSGYA) is a signal peptide. Kelch repeat units follow at residues 51–95 (VIYV…VFLN), 97–149 (ELYV…VKLN), 151–186 (TMVLITGGVNEHIFDKYFIDIAAAAADESEKNKVIY), 187–232 (NYFN…VMGN), 235–284 (LMLI…LAGA), 306–355 (QNYT…SYGD), and 357–386 (VFLIGGENAKGKPVSSVTSFTMRDGNLLIK). Catalysis depends on E241, which acts as the Proton acceptor.

The protein belongs to the NanM family. As to quaternary structure, homodimer.

It localises to the periplasm. The catalysed reaction is N-acetyl-alpha-neuraminate = N-acetyl-beta-neuraminate. Its function is as follows. Converts alpha-N-acetylneuranimic acid (Neu5Ac) to the beta-anomer, accelerating the equilibrium between the alpha- and beta-anomers. Probably facilitates sialidase-negative bacteria to compete successfully for limited amounts of extracellular Neu5Ac, which is likely taken up in the beta-anomer. In addition, the rapid removal of sialic acid from solution might be advantageous to the bacterium to damp down host responses. The chain is N-acetylneuraminate epimerase from Salmonella typhimurium (strain LT2 / SGSC1412 / ATCC 700720).